A 171-amino-acid chain; its full sequence is Spiderine-2b (171 aa).

The signal sequence occupies residues methionine 1 to alanine 18. A propeptide spans threonine 19–arginine 58 (removed in mature form). The linear cationic cytotoxin domain stretch occupies residues lysine 59–leucine 104. An Oxytoxin-type inhibitor cystine knot (ICK) domain is found at asparagine 118–glutamate 171. Intrachain disulfides connect cysteine 121/cysteine 135, cysteine 128/cysteine 140, cysteine 132/cysteine 167, cysteine 134/cysteine 156, and cysteine 142/cysteine 154.

The protein belongs to the spiderine family. Cationic/spiderine subfamily. In terms of tissue distribution, expressed by the venom gland.

It is found in the secreted. Its function is as follows. Has antimicrobial, insecticidal, cytolytic and cytotoxic activity. The sequence is that of Spiderine-2b from Oxyopes takobius (Lynx spider).